Here is a 433-residue protein sequence, read N- to C-terminus: DNA polymerase processivity factor (433 aa).

The tract at residues 274-433 (RGDPFDKNYV…VPNTKKQKCG (160 aa)) is disordered. Over residues 298–307 (SLSSLANAGG) the composition is skewed to low complexity. 2 stretches are compositionally biased toward gly residues: residues 325–336 (GLGGLGGGGGGG) and 344–359 (GGGG…GGGG). Basic and acidic residues predominate over residues 360-376 (GDHDHGLSSKEKYEQHK). Residues 385-398 (GGSGGGGGGGGGGL) show a composition bias toward gly residues.

Belongs to the herpesviridae polymerase accessory protein family. As to quaternary structure, forms homodimers. Interacts with host SMARCB1. Interacts with host NCL/nucleolin; this interaction is important for the organization of proteins within viral replication compartments. Interacts with UL112/UL113; this interaction is necessary for efficient viral DNA replication. Interacts with UL84. Interacts with the uracil DNA glycosylase UL114. Interacts with the DNA polymerase catalytic subunit UL54. Interacts with host IRF3. Interacts with host RELA. Phosphorylated by UL97 on serine residues, phosphorylation seems important for UL44 nuclear entry but does not directly affect its role in replication. Post-translationally, sumoylated. Sumoylation on Lys-410 increases viral DNA replication.

It is found in the virion. The protein localises to the host nucleus. Accessory subunit of the DNA polymerase that plays an essential role in viral DNA replication and acts by increasing the processivity of polymerization. Forms dimers that binds to double-stranded DNA and UL54 specifically to stimulates long chain DNA synthesis efficiently. Plays an important role in maintaining the structure of viral replication compartments by interacting with host nucleolin/NUC. In addition, suppresses innate immune responses through effects on host IRF3 and NF-kappa-B. Mechanistically, interfere with the binding of IRF3 and the p65 NF-kappa-B subunit to the promoters of antiviral genes, thereby inhibiting the expression of these genes. This Human cytomegalovirus (strain Merlin) (HHV-5) protein is DNA polymerase processivity factor (UL44).